The primary structure comprises 85 residues: uncharacterized protein (85 aa).

Residues 64–76 show a composition bias toward basic and acidic residues; sequence DPPVRRSGGREQH. Positions 64–85 are disordered; the sequence is DPPVRRSGGREQHLAQVWRATS.

This is an uncharacterized protein from Mycobacterium bovis (strain ATCC BAA-935 / AF2122/97).